The primary structure comprises 31 residues: Cytochrome b6-f complex subunit 6 (31 aa).

Residues 4–24 (ITSYFGFLLAVLIITSSLFIG) form a helical membrane-spanning segment.

It belongs to the PetL family. The 4 large subunits of the cytochrome b6-f complex are cytochrome b6, subunit IV (17 kDa polypeptide, PetD), cytochrome f and the Rieske protein, while the 4 small subunits are PetG, PetL, PetM and PetN. The complex functions as a dimer.

The protein resides in the plastid. Its subcellular location is the chloroplast thylakoid membrane. Its function is as follows. Component of the cytochrome b6-f complex, which mediates electron transfer between photosystem II (PSII) and photosystem I (PSI), cyclic electron flow around PSI, and state transitions. PetL is important for photoautotrophic growth as well as for electron transfer efficiency and stability of the cytochrome b6-f complex. The chain is Cytochrome b6-f complex subunit 6 from Phaseolus vulgaris (Kidney bean).